The sequence spans 152 residues: MKTPIEVKILDSRIGSQFPLPAYATPGSAGMDLRAMLETSIQVAPGETILIPTGISIHVADSSLAAVILPRSGLGHKHGIVLGNLVGLIDSDYQGPLMVSCWNRGSEPFTLEIGDRLAQLVFVPVVQAEFKLVDEFDNSSRGEGGFGHSGTK.

Substrate-binding positions include 71 to 73, N84, 88 to 90, and M98; these read RSG and LID.

Belongs to the dUTPase family. Requires Mg(2+) as cofactor.

The enzyme catalyses dUTP + H2O = dUMP + diphosphate + H(+). It functions in the pathway pyrimidine metabolism; dUMP biosynthesis; dUMP from dCTP (dUTP route): step 2/2. Its function is as follows. This enzyme is involved in nucleotide metabolism: it produces dUMP, the immediate precursor of thymidine nucleotides and it decreases the intracellular concentration of dUTP so that uracil cannot be incorporated into DNA. This is Deoxyuridine 5'-triphosphate nucleotidohydrolase from Shewanella sediminis (strain HAW-EB3).